The sequence spans 103 residues: Large ribosomal subunit protein uL24 (103 aa).

The protein belongs to the universal ribosomal protein uL24 family. In terms of assembly, part of the 50S ribosomal subunit.

Its function is as follows. One of two assembly initiator proteins, it binds directly to the 5'-end of the 23S rRNA, where it nucleates assembly of the 50S subunit. In terms of biological role, one of the proteins that surrounds the polypeptide exit tunnel on the outside of the subunit. In Oceanobacillus iheyensis (strain DSM 14371 / CIP 107618 / JCM 11309 / KCTC 3954 / HTE831), this protein is Large ribosomal subunit protein uL24.